Consider the following 336-residue polypeptide: NADH-quinone oxidoreductase subunit H (336 aa).

8 helical membrane passes run 17–37 (WFII…TYAI), 85–105 (ALFT…LAVM), 116–136 (LGIG…GVIT), 154–174 (AAQM…IVLL), 190–210 (VWNI…AQAE), 247–267 (VYMF…WLPI), 274–294 (IPGI…QFWI), and 309–329 (FAWK…AVVV).

The protein belongs to the complex I subunit 1 family. As to quaternary structure, NDH-1 is composed of 14 different subunits. Subunits NuoA, H, J, K, L, M, N constitute the membrane sector of the complex.

It localises to the cell membrane. It carries out the reaction a quinone + NADH + 5 H(+)(in) = a quinol + NAD(+) + 4 H(+)(out). NDH-1 shuttles electrons from NADH, via FMN and iron-sulfur (Fe-S) centers, to quinones in the respiratory chain. The immediate electron acceptor for the enzyme in this species is believed to be ubiquinone. Couples the redox reaction to proton translocation (for every two electrons transferred, four hydrogen ions are translocated across the cytoplasmic membrane), and thus conserves the redox energy in a proton gradient. This subunit may bind ubiquinone. This Brevibacillus brevis (strain 47 / JCM 6285 / NBRC 100599) protein is NADH-quinone oxidoreductase subunit H.